The primary structure comprises 62 residues: Keratin-associated protein 19-5 (62 aa).

The interval 5–56 is 14 X 2 AA repeats of G-[YCGS]; it reads GSYYGGLGSGIRGFGNLGYGYGCGCGFGGYGYGSGYGRYGYGYPRPLYYGGY.

This sequence belongs to the KRTAP type 19 family. In terms of assembly, interacts with hair keratins. As to expression, expressed in skin during two hair growth cycles. Expression restricted to the cortical cells of hair follicles, appearing first in the cortical cells processing the flat nuclei located a few cells above the dermal papilla.

In the hair cortex, hair keratin intermediate filaments are embedded in an interfilamentous matrix, consisting of hair keratin-associated proteins (KRTAP), which are essential for the formation of a rigid and resistant hair shaft through their extensive disulfide bond cross-linking with abundant cysteine residues of hair keratins. The matrix proteins include the high-sulfur and high-glycine-tyrosine keratins. The protein is Keratin-associated protein 19-5 (Krtap19-5) of Mus musculus (Mouse).